Consider the following 202-residue polypeptide: Probable cobalt-precorrin-6B C(15)-methyltransferase (decarboxylating) (202 aa).

S-adenosyl-L-methionine is bound by residues threonine 29, 53–57 (GCGSG), aspartate 77, and valine 106.

Belongs to the methyltransferase superfamily. Archaeal-type CbiT family.

The enzyme catalyses Co-precorrin-6B + S-adenosyl-L-methionine = Co-precorrin-7 + S-adenosyl-L-homocysteine + CO2. It participates in cofactor biosynthesis; adenosylcobalamin biosynthesis; cob(II)yrinate a,c-diamide from sirohydrochlorin (anaerobic route): step 8/10. In terms of biological role, catalyzes the methylation of C-15 in cobalt-precorrin-6B followed by the decarboxylation of C-12 to form cobalt-precorrin-7. This chain is Probable cobalt-precorrin-6B C(15)-methyltransferase (decarboxylating), found in Thermoplasma acidophilum (strain ATCC 25905 / DSM 1728 / JCM 9062 / NBRC 15155 / AMRC-C165).